A 483-amino-acid polypeptide reads, in one-letter code: ATP synthase subunit beta (483 aa).

Residue glycine 162–threonine 169 coordinates ATP.

It belongs to the ATPase alpha/beta chains family. As to quaternary structure, F-type ATPases have 2 components, CF(1) - the catalytic core - and CF(0) - the membrane proton channel. CF(1) has five subunits: alpha(3), beta(3), gamma(1), delta(1), epsilon(1). CF(0) has four main subunits: a(1), b(1), b'(1) and c(9-12).

Its subcellular location is the cellular thylakoid membrane. The enzyme catalyses ATP + H2O + 4 H(+)(in) = ADP + phosphate + 5 H(+)(out). Produces ATP from ADP in the presence of a proton gradient across the membrane. The catalytic sites are hosted primarily by the beta subunits. This is ATP synthase subunit beta from Rippkaea orientalis (strain PCC 8801 / RF-1) (Cyanothece sp. (strain PCC 8801)).